The following is a 404-amino-acid chain: Exodeoxyribonuclease 7 large subunit (404 aa).

It belongs to the XseA family. As to quaternary structure, heterooligomer composed of large and small subunits.

It is found in the cytoplasm. It catalyses the reaction Exonucleolytic cleavage in either 5'- to 3'- or 3'- to 5'-direction to yield nucleoside 5'-phosphates.. Its function is as follows. Bidirectionally degrades single-stranded DNA into large acid-insoluble oligonucleotides, which are then degraded further into small acid-soluble oligonucleotides. The polypeptide is Exodeoxyribonuclease 7 large subunit (Caldanaerobacter subterraneus subsp. tengcongensis (strain DSM 15242 / JCM 11007 / NBRC 100824 / MB4) (Thermoanaerobacter tengcongensis)).